The chain runs to 1386 residues: Roundabout homolog 3 (1386 aa).

A signal peptide spans 1-20 (MLRYLLKTLLQMNLFADSLA). The Extracellular segment spans residues 21 to 891 (GDISNSSELL…VRLARVLREP (871 aa)). Residues Asn-25, Asn-34, Asn-41, and Asn-53 are each glycosylated (N-linked (GlcNAc...) asparagine). 5 consecutive Ig-like C2-type domains span residues 64 to 160 (PRIV…ASLE), 166 to 253 (DDFR…AEVM), 258 to 342 (PSFL…GSLS), 347 to 440 (PQLV…ALLE), and 450 to 531 (PPVI…GEAT). Cys-85 and Cys-143 are disulfide-bonded. The N-linked (GlcNAc...) asparagine glycan is linked to Asn-156. 3 disulfides stabilise this stretch: Cys-187–Cys-236, Cys-279–Cys-326, and Cys-368–Cys-424. Residues Asn-410, Asn-459, and Asn-503 are each glycosylated (N-linked (GlcNAc...) asparagine). Cys-472 and Cys-521 are disulfide-bonded. Disordered regions lie at residues 541–563 (DWGV…SQPV) and 639–662 (EPSP…EDPW). The span at 546-559 (PDPPTEPSSPPGAP) shows a compositional bias: pro residues. 3 consecutive Fibronectin type-III domains span residues 558–652 (APSQ…TQDS), 671–766 (VAVR…IPEE), and 771–869 (PPQG…SPPD). N-linked (GlcNAc...) asparagine glycosylation is found at Asn-784, Asn-813, and Asn-820. The chain crosses the membrane as a helical span at residues 892–912 (AFLAGSGAACGALLLGLCAAL). Residues 913-1386 (YWRRKQRKEL…PGQKRREEPR (474 aa)) are Cytoplasmic-facing. 3 disordered regions span residues 965–989 (SWPH…NPDP), 1028–1310 (ELQT…AVPL), and 1327–1386 (SRPS…EEPR). Residues 1067–1083 (VKLLGKPVQMPSLNWPE) are compositionally biased toward low complexity. A compositionally biased stretch (acidic residues) spans 1099–1112 (GPEEELEGSSEPEE). The span at 1158–1169 (PSPPDPPQPPTD) shows a compositional bias: pro residues. 2 stretches are compositionally biased toward low complexity: residues 1178-1191 (RRVP…LSVS) and 1202-1229 (PAGL…SAPG). Ser-1263 carries the post-translational modification Phosphoserine. Residues 1294–1304 (LERERSGERKA) show a composition bias toward basic and acidic residues. Residues 1333–1344 (SRGQGTSTCSTA) are compositionally biased toward polar residues. Residues 1345–1361 (GSNSSRGSSSSRGSRGP) are compositionally biased toward low complexity.

Belongs to the immunoglobulin superfamily. ROBO family. Monomer. Interacts (via Fibronectin type-III 1 domain) with NELL2 (via the EGF domains) with a 3:3 stoichiometry; this interaction promotes oligomerization of ROBO3 resulting in the repulsion of commissural axons in the midline.

It is found in the membrane. In terms of biological role, receptor involved in axon guidance during development. Acts as a multifunctional regulator of pathfinding that simultaneously mediates NELL2 repulsion, inhibits SLIT repulsion, and facilitates Netrin-1/NTN1 attraction. In spinal cord development plays a role in guiding commissural axons probably by preventing premature sensitivity to Slit proteins thus inhibiting Slit signaling through ROBO1/ROBO2. Binding OF NELL2 to the receptor ROBO3 promotes oligomerization of ROBO3, resulting in the repulsion of commissural axons in the midline. ROBO3 also indirectly boosts axon attraction to NTN1 without interacting with NTN1 itself. The polypeptide is Roundabout homolog 3 (Homo sapiens (Human)).